The primary structure comprises 492 residues: Catalase isozyme B (492 aa).

Residues 1–20 are disordered; sequence MDPYKHRPSSGSNSTFWTTN. A compositionally biased stretch (polar residues) spans 9–20; sequence SSGSNSTFWTTN. Arg62 serves as a coordination point for heme. His65 is an active-site residue. Heme is bound at residue Arg102. The active site involves Asn138. Phe151 lines the heme pocket. The residue at position 210 (Tyr210) is a Phosphotyrosine. The 3-(S-cysteinyl)-tyrosine (Cys-Tyr) cross-link spans 325–348; that stretch reads CPAIIVPGIHYSDDKLLQTRIFSY. 3 residues coordinate heme: Arg344, Tyr348, and Arg355. The Peroxisome targeting signal motif lies at 484–492; the sequence is SRLNLKPNM.

This sequence belongs to the catalase family. As to quaternary structure, homotetramer. Interacts with GLO1 and GLO4; these interactions are disturbed by alpha-hydroxy-2-pyridinemethanesulfonic acid (HPMS) and salicylic acid (SA). Interacts with STRK1 at the plasma membrane. The cofactor is heme. In terms of tissue distribution, predominantly expressed in roots and, at low levels, in leaves (e.g. sheaths). Detected in seeds. Also present in panicles and culms. Observed in stems and anthers.

Its subcellular location is the peroxisome. It localises to the glyoxysome. It is found in the cell membrane. It catalyses the reaction 2 H2O2 = O2 + 2 H2O. With respect to regulation, strongly inhibited by beta-mercaptoethanol, sodium azide and potassium cyanide. Slightly repressed by 3-amino-1,2,4-triazole (3-AT). Activity is repressed proportionally to increased concentration of NaCl, KCl, LiCl and MgCl(2). Functionally, occurs in almost all aerobically respiring organisms and serves to protect cells from the toxic effects of hydrogen peroxide. May prevent the excessive accumulation of H(2)O(2) during water stress in response to the accumulation of abscisic acid (ABA). Involved in the modulation of ROS levels related to root growth regulation. Required for pollen viability and floret fertility upon heat stress (HS) by detoxifying reactive oxygen species (ROS) and malondialdehyde (MDA) accumulation in developing anthers exposed to HS. This Oryza sativa subsp. japonica (Rice) protein is Catalase isozyme B (CATB).